The primary structure comprises 297 residues: Glycine--tRNA ligase alpha subunit (297 aa).

Belongs to the class-II aminoacyl-tRNA synthetase family. Tetramer of two alpha and two beta subunits.

Its subcellular location is the cytoplasm. It catalyses the reaction tRNA(Gly) + glycine + ATP = glycyl-tRNA(Gly) + AMP + diphosphate. The chain is Glycine--tRNA ligase alpha subunit from Sulfurihydrogenibium sp. (strain YO3AOP1).